Reading from the N-terminus, the 92-residue chain is MSGYFNHLSSNAHFANIQADQGFIGDATGTSSDHGSSGMVDFALQLGELSLEEKILKEFTLFQSKNMDLLQETATACPSTNPSLRQSRIQGW.

This is an uncharacterized protein from Saccharomyces cerevisiae (strain ATCC 204508 / S288c) (Baker's yeast).